The sequence spans 408 residues: Aminopeptidase T (408 aa).

A divalent metal cation is bound by residues glutamate 250, glutamate 316, glutamate 340, histidine 345, histidine 376, and aspartate 378.

This sequence belongs to the peptidase M29 family. Homodimer. Co(2+) serves as cofactor. The cofactor is Zn(2+). It depends on Mg(2+) as a cofactor.

Metal-dependent exopeptidase. This is Aminopeptidase T from Thermus aquaticus.